The following is a 754-amino-acid chain: 5-methyltetrahydropteroyltriglutamate--homocysteine methyltransferase (754 aa).

Residues 15 to 18 and Lys114 each bind 5-methyltetrahydropteroyltri-L-glutamate; that span reads RELK. Residues 430–432 and Glu483 contribute to the L-homocysteine site; that span reads IGS. Residues 430-432 and Glu483 each bind L-methionine; that span reads IGS. 5-methyltetrahydropteroyltri-L-glutamate is bound by residues 514 to 515 and Trp560; that span reads RC. Asp598 contacts L-homocysteine. Position 598 (Asp598) interacts with L-methionine. Glu604 serves as a coordination point for 5-methyltetrahydropteroyltri-L-glutamate. Zn(2+)-binding residues include His641, Cys643, and Glu665. His694 functions as the Proton donor in the catalytic mechanism. Cys726 is a Zn(2+) binding site.

Belongs to the vitamin-B12 independent methionine synthase family. Zn(2+) serves as cofactor.

It catalyses the reaction 5-methyltetrahydropteroyltri-L-glutamate + L-homocysteine = tetrahydropteroyltri-L-glutamate + L-methionine. It functions in the pathway amino-acid biosynthesis; L-methionine biosynthesis via de novo pathway; L-methionine from L-homocysteine (MetE route): step 1/1. Functionally, catalyzes the transfer of a methyl group from 5-methyltetrahydrofolate to homocysteine resulting in methionine formation. The sequence is that of 5-methyltetrahydropteroyltriglutamate--homocysteine methyltransferase from Campylobacter jejuni subsp. jejuni serotype O:6 (strain 81116 / NCTC 11828).